We begin with the raw amino-acid sequence, 1127 residues long: MASSSSSSSRNWSYHVFPSFSGEDVRNTFLSHFLKELDRKLIISFKDNEIERSQSLDPELKHGIRNSRIAVVVFSKTYASSSWCLNELLEIVKCKKEFGQLVIPIFYNLDPSHVRKQTGDFGKIFEKTCRNKTVDEKIRWKEALTDVANILGYHIVTWDNEASMIEEIANDILGKMNISPSNDFEDLVGIEDHITKMSSLLHLESEEVRMVGIWGPSGIGKTTISRALFSRLSCQFQSSVFIDKVFISKSMEVYSGANLVDYNMKLHLQRAFLAEIFDKKDIKIHVGAMEKMVKHRKALIVIDDLDDQDVLDALAGQTQWFGSGSRIIVVTENKHFLRANRIDHIYKVCLPSNALALEMFCRSAFKKNSPPDDFLELSSEVALRAGNLPLGLNVLGSNLRGINKGYWIDMLPRLQGLDGKIGKTLRVSYDGLNNRKDEAIFRHIACIFNGEKVSDIKLLLANSNLDVNIGLKNLVDRSLICERFNTLEMHSLLQELGKEIVRTESNQPGEREFLVDLKDICDVLEHNTGTKKVLGITLDIDETDELHIHESSFKGMHNLLFLKIYTKKLDQKKKVRWHLPERFDYLPSRLRLLRFDRYPSKCLPSNFHPENLVKLQMQQSKLEKLWDGVHSLAGLRNMDLRGSRNLKEIPDLSMATNLETLKLSSCSSLVELPSSIQYLNKLNDLDMSYCDHLETIPSGVNLKSLDRLNLSGCSRLKSFLDIPTNISWLDIGQTADIPSNLRLQNLDELILCERVQLRTPLMTMLSPTLTRLTFSNNPSFVEVPSSIQNLYQLEHLEIMNCRNLVTLPTGINLDSLISLDLSHCSQLKTFPDISTNISDLNLSYTAIEEVPLSIEKLSLLCYLDMNGCSNLLCVSPNISKLKHLERADFSDCVELTEASWNGSSSEMVKLLPADNFSTVKLNFINCFKLDLTALIQNQTFFMQLILTGEEVPSYFTHRTSGDSISLPHISVCQSFFSFRGCTVIDVDSFSTISVSFDIEVCCRFIDRFGNHFDSTDFPGYFITTKLGGHLVVFDCYFPFNEEFTTFLDGQFNYDHVDIQFRLTNDNSQLKLKGCGILLSEDVPSLDNRPCSPNILPGVCEDSALERRSFRTKMRMMRMRLLKKLLNR.

Methionine 1 is subject to N-acetylmethionine. Positions 12-176 constitute a TIR domain; sequence WSYHVFPSFS…EIANDILGKM (165 aa). Glutamate 87 is a catalytic residue. LRR repeat units lie at residues 197-221, 540-563, 587-609, 610-632, 633-656, 658-679, 680-704, 766-790, 791-813, 814-834, and 835-857; these read MSSLLHLESEEVRMVGIWGPSGIGK, IDETDELHIHESSFKGMHNLLFLK, PSRLRLLRFDRYPSKCLPSNFHP, ENLVKLQMQQSKLEKLWDGVHSL, AGLRNMDLRGSRNLKEIPDLSMAT, LETLKLSSCSSLVELPSSIQYL, NKLNDLDMSYCDHLETIPSGVNLKS, SPTLTRLTFSNNPSFVEVPSSIQNL, YQLEHLEIMNCRNLVTLPTGINL, DSLISLDLSHCSQLKTFPDIS, and TNISDLNLSYTAIEEVPLSIEKL.

Interacts with EDS1. As to expression, ubiquitous.

It carries out the reaction NAD(+) + H2O = ADP-D-ribose + nicotinamide + H(+). Its function is as follows. Disease resistance (R) protein that specifically recognizes the hopA1 type III effector avirulence protein from Pseudomonas syringae. Resistance proteins guard the plant against pathogens that contain an appropriate avirulence protein via an indirect interaction with this avirulence protein. That triggers a defense system including the hypersensitive response, which restricts the pathogen growth. In Arabidopsis thaliana (Mouse-ear cress), this protein is Disease resistance protein RPS6.